The following is a 369-amino-acid chain: Glutamate 5-kinase (369 aa).

Lys9 serves as a coordination point for ATP. The substrate site is built by Ser49, Asp136, and Asn148. ATP-binding positions include 168–169 and 210–216; these read TD and TGGMLTK. Residues 275 to 355 form the PUA domain; sequence QGSIWVDKGA…KGVLIYRDDW (81 aa).

It belongs to the glutamate 5-kinase family.

It is found in the cytoplasm. It carries out the reaction L-glutamate + ATP = L-glutamyl 5-phosphate + ADP. The protein operates within amino-acid biosynthesis; L-proline biosynthesis; L-glutamate 5-semialdehyde from L-glutamate: step 1/2. Functionally, catalyzes the transfer of a phosphate group to glutamate to form L-glutamate 5-phosphate. This Streptococcus pneumoniae (strain 70585) protein is Glutamate 5-kinase.